The chain runs to 557 residues: MRSDMIKKGFDKAPHRSLLKATGLKDEDFDKPFIAICNSFIEIIPGHKHLNEFGKLVKEAVRAAGMVPFEFNTIGVDDGIAMGHIGMRYSLPSREIIADSVETVVNAHWFDGMICIPNCDKITPGMMMAALRINIPTVFVSGGPMAAGKTSKGEVVDLSSVFEGVGAYQSGKISEEELKDIEDHGCPSCGSCSGMFTANSMNCLCEVLGLALPGNGSILAIDPRREELIKEAAEKLKVLIERDIKPRDIVTEEAIDDAFALDMAMGGSTNTVLHTLALAHEAGLDYDMSRIDAVSRRVPHLCKVSPASNWHMEDIDRAGGISAILKEMSRKEGVLHLDRITATGQTLRENIAHAEIKDKEVIHSLENPHSEEGGLRILKGNLAKDGAVIKSGATEVKRFEGPCVIFNSQDEALAGIMLGKVKKGDVVVIRYEGPRGGPGMPEMLAPTSAIAGMGLGADVALLTDGRFSGASRGISVGHISPEAAAGGTIALLEQGDIVCIDVEERLLEVRISDEELDKRKKEWKRPEPKVKTGWLGRYAQMVTSANTGAVLKVPNFD.

Asp78 is a Mg(2+) binding site. Cys119 lines the [2Fe-2S] cluster pocket. Mg(2+)-binding residues include Asp120 and Lys121. Lys121 is subject to N6-carboxylysine. Cys192 serves as a coordination point for [2Fe-2S] cluster. Residue Glu442 coordinates Mg(2+). The Proton acceptor role is filled by Ser468.

Belongs to the IlvD/Edd family. Homodimer. [2Fe-2S] cluster serves as cofactor. Requires Mg(2+) as cofactor.

The catalysed reaction is (2R)-2,3-dihydroxy-3-methylbutanoate = 3-methyl-2-oxobutanoate + H2O. It catalyses the reaction (2R,3R)-2,3-dihydroxy-3-methylpentanoate = (S)-3-methyl-2-oxopentanoate + H2O. It functions in the pathway amino-acid biosynthesis; L-isoleucine biosynthesis; L-isoleucine from 2-oxobutanoate: step 3/4. Its pathway is amino-acid biosynthesis; L-valine biosynthesis; L-valine from pyruvate: step 3/4. Functions in the biosynthesis of branched-chain amino acids. Catalyzes the dehydration of (2R,3R)-2,3-dihydroxy-3-methylpentanoate (2,3-dihydroxy-3-methylvalerate) into 2-oxo-3-methylpentanoate (2-oxo-3-methylvalerate) and of (2R)-2,3-dihydroxy-3-methylbutanoate (2,3-dihydroxyisovalerate) into 2-oxo-3-methylbutanoate (2-oxoisovalerate), the penultimate precursor to L-isoleucine and L-valine, respectively. This chain is Dihydroxy-acid dehydratase, found in Bacillus cereus (strain AH187).